We begin with the raw amino-acid sequence, 438 residues long: MSSGKPHLNLVVIGHVDHGKSTLVGHILYRLGLVDQKTIQMLEEEAKKRGKESFKFAWLLDKLKEERERGVTIALTYMKFETRRYIFTIIDAPGHRDFVKNMITGASQADAALLVVSARKGEFEAGMSPEGQTREHAILAKTMGINQLIVAVNKMDATEPPWSQKRYEQIKTILGKFLKSLGYDISKVPFIPVSAWTGDNLIERSPNMPWYNGPTLVEALDSLEPPPKPIDKPLRIPIQDVYAISGVGTVPVGRVETGVLRVGDKVVFMPPAKVGEVRSIETHHVRIEKAEPGDNIGFNVRGVSKRDIRRGDVAGHLDNPPTVAEEFTARVFIIWHPTAITVGYTPVIHIHTASVASRIVEIKAKLDPRTGKVVEENPQFIKMGDAAIVRFKPIKPLVVEKYSDFPPLGRFAMRDMGKTIGIGVVVDVKPMKIEIKTK.

One can recognise a tr-type G domain in the interval 5–228 (KPHLNLVVIG…ALDSLEPPPK (224 aa)). The interval 14–21 (GHVDHGKS) is G1. 14–21 (GHVDHGKS) is a GTP binding site. S21 is a Mg(2+) binding site. The tract at residues 70–74 (GVTIA) is G2. Positions 91–94 (DAPG) are G3. Residues 91-95 (DAPGH) and 153-156 (NKMD) contribute to the GTP site. Residues 153–156 (NKMD) are G4. A G5 region spans residues 194 to 196 (SAW).

It belongs to the TRAFAC class translation factor GTPase superfamily. Classic translation factor GTPase family. EF-Tu/EF-1A subfamily.

The protein resides in the cytoplasm. The enzyme catalyses GTP + H2O = GDP + phosphate + H(+). Functionally, GTP hydrolase that promotes the GTP-dependent binding of aminoacyl-tRNA to the A-site of ribosomes during protein biosynthesis. The polypeptide is Elongation factor 1-alpha (Staphylothermus marinus (strain ATCC 43588 / DSM 3639 / JCM 9404 / F1)).